Reading from the N-terminus, the 456-residue chain is Bifunctional protein GlmU (456 aa).

Residues 1–229 (MLNNAMSVVI…LSEVEGVNNR (229 aa)) are pyrophosphorylase. UDP-N-acetyl-alpha-D-glucosamine-binding positions include 11-14 (LAAG), Lys-25, Gln-76, 81-82 (GT), 103-105 (YGD), Gly-140, Glu-154, Asn-169, and Asn-227. Residue Asp-105 participates in Mg(2+) binding. Asn-227 contributes to the Mg(2+) binding site. The tract at residues 230-250 (LQLSRLERVYQSEQAEKLLLA) is linker. An N-acetyltransferase region spans residues 251–456 (GVMLRDPARF…EGWRRPVKKK (206 aa)). Positions 333 and 351 each coordinate UDP-N-acetyl-alpha-D-glucosamine. Residue His-363 is the Proton acceptor of the active site. Residues Tyr-366 and Asn-377 each coordinate UDP-N-acetyl-alpha-D-glucosamine. Acetyl-CoA is bound by residues Ala-380, 386 to 387 (NY), Ser-405, Ala-423, and Arg-440.

This sequence in the N-terminal section; belongs to the N-acetylglucosamine-1-phosphate uridyltransferase family. In the C-terminal section; belongs to the transferase hexapeptide repeat family. In terms of assembly, homotrimer. The cofactor is Mg(2+).

It localises to the cytoplasm. The catalysed reaction is alpha-D-glucosamine 1-phosphate + acetyl-CoA = N-acetyl-alpha-D-glucosamine 1-phosphate + CoA + H(+). It catalyses the reaction N-acetyl-alpha-D-glucosamine 1-phosphate + UTP + H(+) = UDP-N-acetyl-alpha-D-glucosamine + diphosphate. It functions in the pathway nucleotide-sugar biosynthesis; UDP-N-acetyl-alpha-D-glucosamine biosynthesis; N-acetyl-alpha-D-glucosamine 1-phosphate from alpha-D-glucosamine 6-phosphate (route II): step 2/2. It participates in nucleotide-sugar biosynthesis; UDP-N-acetyl-alpha-D-glucosamine biosynthesis; UDP-N-acetyl-alpha-D-glucosamine from N-acetyl-alpha-D-glucosamine 1-phosphate: step 1/1. Its pathway is bacterial outer membrane biogenesis; LPS lipid A biosynthesis. Functionally, catalyzes the last two sequential reactions in the de novo biosynthetic pathway for UDP-N-acetylglucosamine (UDP-GlcNAc). The C-terminal domain catalyzes the transfer of acetyl group from acetyl coenzyme A to glucosamine-1-phosphate (GlcN-1-P) to produce N-acetylglucosamine-1-phosphate (GlcNAc-1-P), which is converted into UDP-GlcNAc by the transfer of uridine 5-monophosphate (from uridine 5-triphosphate), a reaction catalyzed by the N-terminal domain. The polypeptide is Bifunctional protein GlmU (Escherichia coli O8 (strain IAI1)).